The chain runs to 1157 residues: ATP-dependent helicase/deoxyribonuclease subunit B (1157 aa).

The UvrD-like helicase ATP-binding domain maps to 1 to 277; the sequence is MTLQIIAGKA…KILLENKRAN (277 aa). Residue 8–15 coordinates ATP; sequence GKAGTGKT. Residues 271–590 enclose the UvrD-like helicase C-terminal domain; that stretch reads LENKRANSDS…VLADMENAKL (320 aa). Residues cysteine 794, cysteine 1115, cysteine 1118, and cysteine 1124 each coordinate [4Fe-4S] cluster.

Belongs to the helicase family. AddB/RexB type 1 subfamily. In terms of assembly, heterodimer of AddA and AddB. Requires Mg(2+) as cofactor. [4Fe-4S] cluster is required as a cofactor.

Its function is as follows. The heterodimer acts as both an ATP-dependent DNA helicase and an ATP-dependent, dual-direction single-stranded exonuclease. Recognizes the chi site generating a DNA molecule suitable for the initiation of homologous recombination. The AddB subunit has 5' -&gt; 3' nuclease activity but not helicase activity. The protein is ATP-dependent helicase/deoxyribonuclease subunit B of Listeria innocua serovar 6a (strain ATCC BAA-680 / CLIP 11262).